Consider the following 459-residue polypeptide: Zinc finger protein 213 (459 aa).

The SCAN box domain maps to 45-126 (RQRFRQFCYG…VALVEDLQKQ (82 aa)). Positions 128 to 188 (VKAWRQDVPS…ALLKEGRPGE (61 aa)) are disordered. Residues 202-292 (VALGDIPFYF…ENRPRAALGP (91 aa)) form the KRAB domain. 5 consecutive C2H2-type zinc fingers follow at residues 317–339 (HSCG…QRTH), 345–367 (HKCP…QGVH), 373–395 (FSCS…QRIH), 401–423 (FGCS…RRVH), and 429–451 (FGCG…QSLH).

Belongs to the krueppel C2H2-type zinc-finger protein family. As to expression, widely expressed with highest levels in testis.

Its subcellular location is the nucleus. In terms of biological role, may be involved in transcriptional regulation. The protein is Zinc finger protein 213 (ZNF213) of Homo sapiens (Human).